A 409-amino-acid polypeptide reads, in one-letter code: Nucleoprotein (409 aa).

Disordered regions lie at residues 1–64 and 167–197; these read MSAG…SNVK and RNSSAVTSRENSRPGSRDSSRGRQRSRVDDD. The RNA-binding stretch occupies residues 30-161; it reads GTGQASWFQS…NNYRWDFIAL (132 aa). Positions 32–157 constitute a CoV N NTD domain; it reads GQASWFQSLK…GGPDNNYRWD (126 aa). Residues 176–197 are compositionally biased toward basic and acidic residues; that stretch reads ENSRPGSRDSSRGRQRSRVDDD. Ser-192 is modified (phosphoserine; by host). The region spanning 217 to 333 is the CoV N CTD domain; it reads SKQKANEMAE…ECVDGVGTRP (117 aa). Residues 228 to 335 are dimerization; sequence KYHKRAIAPG…VDGVGTRPKD (108 aa). A disulfide bridge links Cys-322 with Cys-325. The tract at residues 327 to 409 is disordered; the sequence is DGVGTRPKDD…GEGAFDDINI (83 aa). Basic and acidic residues predominate over residues 332–349; sequence RPKDDPTPRSRAASKDRN. A Phosphothreonine; by host modification is found at Thr-374.

The protein belongs to the gammacoronavirus nucleocapsid protein family. Homooligomer. Both monomeric and oligomeric forms interact with RNA. Interacts with protein M. Interacts with NSP3; this interaction serves to tether the genome to the newly translated replicase-transcriptase complex at a very early stage of infection. ADP-ribosylated. The ADP-ribosylation is retained in the virion during infection. In terms of processing, phosphorylated on serine and threonine residues.

It localises to the virion. The protein localises to the host endoplasmic reticulum-Golgi intermediate compartment. The protein resides in the host Golgi apparatus. Its function is as follows. Packages the positive strand viral genome RNA into a helical ribonucleocapsid (RNP) and plays a fundamental role during virion assembly through its interactions with the viral genome and membrane protein M. Plays an important role in enhancing the efficiency of subgenomic viral RNA transcription as well as viral replication. The protein is Nucleoprotein of Gallus gallus (Chicken).